Reading from the N-terminus, the 322-residue chain is HPr kinase/phosphorylase (322 aa).

Residues H143 and K164 contribute to the active site. Position 158–165 (158–165 (GRSGVGKS)) interacts with ATP. S165 contributes to the Mg(2+) binding site. The active-site Proton acceptor; for phosphorylation activity. Proton donor; for dephosphorylation activity is D182. The segment at 206–215 (MEIRGLGILN) is important for the catalytic mechanism of both phosphorylation and dephosphorylation. E207 lines the Mg(2+) pocket. R250 is an active-site residue. The important for the catalytic mechanism of dephosphorylation stretch occupies residues 271 to 276 (PVKPGR).

This sequence belongs to the HPrK/P family. In terms of assembly, homohexamer. Mg(2+) serves as cofactor.

The enzyme catalyses [HPr protein]-L-serine + ATP = [HPr protein]-O-phospho-L-serine + ADP + H(+). It catalyses the reaction [HPr protein]-O-phospho-L-serine + phosphate + H(+) = [HPr protein]-L-serine + diphosphate. Catalyzes the ATP- as well as the pyrophosphate-dependent phosphorylation of a specific serine residue in HPr, a phosphocarrier protein of the phosphoenolpyruvate-dependent sugar phosphotransferase system (PTS). HprK/P also catalyzes the pyrophosphate-producing, inorganic phosphate-dependent dephosphorylation (phosphorolysis) of seryl-phosphorylated HPr (P-Ser-HPr). The sequence is that of HPr kinase/phosphorylase from Leptospira biflexa serovar Patoc (strain Patoc 1 / Ames).